The sequence spans 25 residues: Glutamine synthetase 2 isozyme (25 aa).

The protein belongs to the glutamine synthetase family. In terms of assembly, homohexamer.

The protein resides in the plastid. It localises to the chloroplast. It carries out the reaction L-glutamate + NH4(+) + ATP = L-glutamine + ADP + phosphate + H(+). Functionally, plays a key role in the nitrogen metabolism of microorganisms, animals and plants. This is Glutamine synthetase 2 isozyme from Emiliania huxleyi (Coccolithophore).